The sequence spans 108 residues: Phosphoribosyl-AMP cyclohydrolase (108 aa).

Mg(2+) is bound at residue aspartate 78. Cysteine 79 provides a ligand contact to Zn(2+). Mg(2+)-binding residues include aspartate 80 and aspartate 82. Zn(2+) contacts are provided by cysteine 95 and cysteine 102.

Belongs to the PRA-CH family. In terms of assembly, homodimer. It depends on Mg(2+) as a cofactor. The cofactor is Zn(2+).

The protein localises to the cytoplasm. The catalysed reaction is 1-(5-phospho-beta-D-ribosyl)-5'-AMP + H2O = 1-(5-phospho-beta-D-ribosyl)-5-[(5-phospho-beta-D-ribosylamino)methylideneamino]imidazole-4-carboxamide. The protein operates within amino-acid biosynthesis; L-histidine biosynthesis; L-histidine from 5-phospho-alpha-D-ribose 1-diphosphate: step 3/9. Functionally, catalyzes the hydrolysis of the adenine ring of phosphoribosyl-AMP. The polypeptide is Phosphoribosyl-AMP cyclohydrolase (Nitrosopumilus maritimus (strain SCM1)).